Here is a 96-residue protein sequence, read N- to C-terminus: Neutrophil defensin 3 (96 aa).

An N-terminal signal peptide occupies residues 1–19 (MRTLVILAAILLVALQAQA). Positions 20–66 (EPLQARTDEATAAQEQIPTDNPEVVVSLAWDESLAPKDSVPGLRKNM) are excised as a propeptide. 3 cysteine pairs are disulfide-bonded: Cys-68-Cys-96, Cys-70-Cys-85, and Cys-75-Cys-95.

It is found in the secreted. In terms of biological role, has bacteriostatic activity against Gram-positive bacteria S.aureus and L.monocytogenes and Gram-negative bacterium E.coli and antifungal activity against C.neoformans. The polypeptide is Neutrophil defensin 3 (Macaca mulatta (Rhesus macaque)).